Consider the following 528-residue polypeptide: uncharacterized protein (528 aa).

Residues 1–51 (MEHPKRPTPKNEALHIDASGRGESSFSVHRSHSGGHEPFAPSPGSSIGASV) are disordered. Tandem repeats lie at residues 185–213 (EQEE…VKKY) and 285–313 (EQEQ…QQAL). Positions 185 to 313 (EQEEEYISNS…EEKRKLQQAL (129 aa)) are 2 X 29 AA repeats. Disordered regions lie at residues 467-497 (RAHG…NNDT) and 509-528 (TVHP…DSHY). The span at 472 to 496 (SPPTVVVQPSTSRAGSNSTANINND) shows a compositional bias: polar residues.

This is an uncharacterized protein from Caenorhabditis elegans.